The chain runs to 46 residues: Mu-segestritoxin-Sf1d (46 aa).

4 cysteine pairs are disulfide-bonded: Cys3-Cys19, Cys10-Cys22, Cys18-Cys42, and Cys24-Cys40. Residues 31 to 33 (RPW) are keys region for toxin activity.

The protein belongs to the neurotoxin 16 (SFI) family. In terms of tissue distribution, expressed by the venom gland.

Its subcellular location is the secreted. Its function is as follows. Insecticidal toxin. It inhibits insect voltage-gated sodium channels (Nav) by partially blocking the channel pore in DUM neurons from the American cockroach, not by acting as a gating modifier. The inhibition is only partially reversible after prolonged washout. In vivo, the toxin causes flaccid paralysis followed by death when injected into Heliothis virescens larvae. It also causes uncoordinated movements followed by full paralysis to sheep blowflies (Lucilia cuprina). When the toxin is fused to snowdrop lectin, it is orally active against larvae of the tomato moth (Laconobia oleracea), the rice brown planthopper (Nilaparvata lugens), and the peach-potato aphid (Myzus persicae). This chain is Mu-segestritoxin-Sf1d, found in Segestria florentina (Tube-web spider).